Consider the following 174-residue polypeptide: NADPH-dependent 7-cyano-7-deazaguanine reductase (174 aa).

Catalysis depends on cysteine 72, which acts as the Thioimide intermediate. The active-site Proton donor is aspartate 79. Substrate-binding positions include 94-96 and 113-114; these read VES and HE.

Belongs to the GTP cyclohydrolase I family. QueF type 1 subfamily.

The protein resides in the cytoplasm. It catalyses the reaction 7-aminomethyl-7-carbaguanine + 2 NADP(+) = 7-cyano-7-deazaguanine + 2 NADPH + 3 H(+). Its pathway is tRNA modification; tRNA-queuosine biosynthesis. Catalyzes the NADPH-dependent reduction of 7-cyano-7-deazaguanine (preQ0) to 7-aminomethyl-7-deazaguanine (preQ1). The sequence is that of NADPH-dependent 7-cyano-7-deazaguanine reductase from Synechococcus elongatus (strain ATCC 33912 / PCC 7942 / FACHB-805) (Anacystis nidulans R2).